Here is a 651-residue protein sequence, read N- to C-terminus: Far upstream element-binding protein 1 (651 aa).

2 disordered regions span residues 1 to 24 (MADY…GVVN) and 40 to 92 (KIGG…HQQQ). Ala2 carries the post-translational modification N-acetylalanine. A phosphoserine mark is found at Ser48 and Ser51. A compositionally biased stretch (basic and acidic residues) spans 61–73 (RPLEDGDQPDAKK). 3 KH domains span residues 96–160 (VMTE…KRLL), 181–247 (NAVQ…KEMV), and 271–335 (NEGI…AEII). Phosphoserine is present on Ser136. Thr149 carries the phosphothreonine modification. An omega-N-methylarginine mark is found at Arg317, Arg355, Arg357, and Arg359. The KH 4 domain maps to 372–439 (LQEFNFIVPT…QQIDYARQLI (68 aa)). Phosphoserine is present on Ser411. Position 428 is a phosphothreonine (Thr428). 3 disordered regions span residues 443 to 528 (IGGP…GADP), 545 to 574 (AQPP…APAG), and 625 to 651 (TSPQ…HHLY). Residues 464-501 (PHGPPGPPGPGTPMGPYNPAPYNPGPPGPAPHGPPAPY) are compositionally biased toward pro residues. Low complexity-rich tracts occupy residues 514–528 (QQQA…GADP) and 552–574 (PAGA…APAG). Position 626 is a phosphoserine (Ser626).

Found in a complex with PUF60 and far upstream element (FUSE) DNA segment. Interacts with PUF60 and JTV1. In terms of processing, ubiquitinated. This targets the protein for proteasome-mediated degradation.

It localises to the nucleus. In terms of biological role, regulates MYC expression by binding to a single-stranded far-upstream element (FUSE) upstream of the MYC promoter. May act both as activator and repressor of transcription. This chain is Far upstream element-binding protein 1 (Fubp1), found in Mus musculus (Mouse).